The sequence spans 63 residues: Prokaryotic ubiquitin-like protein Pup (63 aa).

Residues 1–28 (MPQEFEQIRSADQPLDSEESAPVAGART) form a disordered region. The tract at residues 19–57 (ESAPVAGARTDDTVDALDAVLDDIESVLETNAEEYVGSF) is ARC ATPase binding. E63 is covalently cross-linked (Isoglutamyl lysine isopeptide (Glu-Lys) (interchain with K-? in acceptor proteins)).

This sequence belongs to the prokaryotic ubiquitin-like protein family. Strongly interacts with the proteasome-associated ATPase ARC through a hydrophobic interface; the interacting region of Pup lies in its C-terminal half. There is one Pup binding site per ARC hexamer ring.

It functions in the pathway protein degradation; proteasomal Pup-dependent pathway. Its function is as follows. Protein modifier that is covalently attached to lysine residues of substrate proteins, thereby targeting them for proteasomal degradation. The tagging system is termed pupylation. This is Prokaryotic ubiquitin-like protein Pup from Bifidobacterium dentium (strain ATCC 27534 / DSM 20436 / JCM 1195 / Bd1).